Reading from the N-terminus, the 140-residue chain is MAFFKSAVFLVCVVLAAAGSASRSKRALVGGWKTQDPTNPKFENLAHYAVSTQVEGREYYDTVLELLEVQTQIVAGVNYKLKFTTTQSTCKIETGVEYSKELCQPKTNKVEAVCTSIIYTVPWQNIKRVLSYHCDAPNDV.

The signal sequence occupies residues M1–A18. 2 disulfide bridges follow: C90–C103 and C114–C134.

It belongs to the cystatin family. As to expression, expressed in midgut (at protein level).

The protein localises to the secreted. In terms of biological role, inhibitor of cysteine proteinases. Inhibits several endogenous midgut digestive cysteine proteases, such as cathepsin L1, L3, B and C, but not aspartic protease cathepsin D1 and cysteine protease legumain. Inhibits proteolysis of blood proteins catalyzed by tick gut cysteine cathepsins. Inhibits host cathepsin B (CSTB), C (CTSC), H (CTSH), K (CTSK), L (CTSL) and S (CTSS). The chain is Mialostatin from Ixodes ricinus (Common tick).